Consider the following 409-residue polypeptide: Putative competence-damage inducible protein (409 aa).

This sequence belongs to the CinA family.

This is Putative competence-damage inducible protein from Clostridium botulinum (strain Loch Maree / Type A3).